Here is a 151-residue protein sequence, read N- to C-terminus: Trivalent organoarsenical cleaving enzyme (151 aa).

The VOC domain occupies 2-118; it reads SRVQLALRVP…GGEPWEVYVV (117 aa). Gln-5 is a Fe(2+) binding site. A roxarsone (III)-binding site is contributed by Asp-61. His-62 contacts Fe(2+). Roxarsone (III) contacts are provided by Cys-95 and Cys-96. A Fe(2+)-binding site is contributed by Glu-114.

As to quaternary structure, monomer. Requires Fe(2+) as cofactor.

It catalyses the reaction methylarsonous acid + AH2 + O2 = arsenite + methanol + A + H(+). It carries out the reaction roxarsone (III) + AH2 + O2 = 4-hydroxy-3-nitrocyclohexa-2,5-dien-1-one + arsenite + A + H(+). The catalysed reaction is nitarsone (III) + AH2 + O2 = 4-nitrocyclohexa-2,5-dien-1-one + arsenite + A + H(+). The enzyme catalyses 4-aminophenylarsonous acid + AH2 + O2 = 4-aminocyclohexa-2,5-dien-1-one + arsenite + A. Functionally, nonheme iron-dependent dioxygenase that can break carbon-arsenic bonds, playing a role in the detoxification of environmental organoarsenical compounds. Catalyzes the oxygen-dependent demethylation of highly toxic methylarsonous acid (MAs(III)) to arsenite, which can then be exported out of the cell. Can also cleave the C-As bond in several trivalent aromatic arsenicals, including roxarsone (III), nitarsone (III) and (4-aminophenyl)arsonous acid. Organoarsenical degradation by this enzyme is proposed to have a significant impact on the arsenic biogeocycle that maintains a balance between organic and inorganic species. The polypeptide is Trivalent organoarsenical cleaving enzyme (Thermomonospora curvata (strain ATCC 19995 / DSM 43183 / JCM 3096 / KCTC 9072 / NBRC 15933 / NCIMB 10081 / Henssen B9)).